The chain runs to 464 residues: 3-isopropylmalate dehydratase large subunit (464 aa).

The [4Fe-4S] cluster site is built by cysteine 337, cysteine 397, and cysteine 400.

This sequence belongs to the aconitase/IPM isomerase family. LeuC type 1 subfamily. As to quaternary structure, heterodimer of LeuC and LeuD. [4Fe-4S] cluster serves as cofactor.

It catalyses the reaction (2R,3S)-3-isopropylmalate = (2S)-2-isopropylmalate. Its pathway is amino-acid biosynthesis; L-leucine biosynthesis; L-leucine from 3-methyl-2-oxobutanoate: step 2/4. Its function is as follows. Catalyzes the isomerization between 2-isopropylmalate and 3-isopropylmalate, via the formation of 2-isopropylmaleate. The polypeptide is 3-isopropylmalate dehydratase large subunit (Bacillus cereus (strain 03BB102)).